Consider the following 212-residue polypeptide: MACRSWVLGILLVLVGCAGPEVHQGEVTTVVIQPVQEQADIANEPFVLTGRLAVNARQHRFSGGIRWQHTGQSDEIYLFSPLGQIVAEIFRDQTGVRLVTSEPAIYRAQNAEYLTSQVLGWELPLAGMRFWVRGTHFPDTVAEKDLDKNRRTVAIRQDGWQVVYQNYYPAQEGMSVLPRLLEFSRPDVKMRLLVDQWQGETKSGDATGRKLP.

The signal sequence occupies residues 1–16 (MACRSWVLGILLVLVG). C17 carries N-palmitoyl cysteine lipidation. C17 carries the S-diacylglycerol cysteine lipid modification.

Belongs to the LolB family. In terms of assembly, monomer.

It localises to the cell outer membrane. Its function is as follows. Plays a critical role in the incorporation of lipoproteins in the outer membrane after they are released by the LolA protein. In Nitrosomonas europaea (strain ATCC 19718 / CIP 103999 / KCTC 2705 / NBRC 14298), this protein is Outer-membrane lipoprotein LolB.